Here is a 354-residue protein sequence, read N- to C-terminus: Sulfate permease CysP (354 aa).

The next 8 membrane-spanning stretches (helical) occupy residues 3–23 (LAAI…GAAA), 40–60 (ALIL…GEVV), 77–97 (IVCI…LLGI), 125–145 (LIIV…TYFV), 164–184 (ILGI…GMNN), 197–217 (VLDV…GALL), 293–313 (VWIV…SLFL), and 320–340 (IFIM…TKAI).

It belongs to the inorganic phosphate transporter (PiT) (TC 2.A.20) family.

The protein localises to the cell membrane. Functionally, involved in the import of sulfate. The chain is Sulfate permease CysP (cysP) from Bacillus subtilis (strain 168).